We begin with the raw amino-acid sequence, 208 residues long: Small ribosomal subunit protein uS4 (208 aa).

One can recognise an S4 RNA-binding domain in the interval 95–157; the sequence is RRIDNIVYRA…DSLKKLIRSN (63 aa).

The protein belongs to the universal ribosomal protein uS4 family. As to quaternary structure, part of the 30S ribosomal subunit. Contacts protein S5. The interaction surface between S4 and S5 is involved in control of translational fidelity.

One of the primary rRNA binding proteins, it binds directly to 16S rRNA where it nucleates assembly of the body of the 30S subunit. In terms of biological role, with S5 and S12 plays an important role in translational accuracy. In Borrelia garinii subsp. bavariensis (strain ATCC BAA-2496 / DSM 23469 / PBi) (Borreliella bavariensis), this protein is Small ribosomal subunit protein uS4.